The following is a 245-amino-acid chain: Terpene cyclase ausL (245 aa).

A run of 7 helical transmembrane segments spans residues 17 to 37 (ILAI…VNYI), 51 to 71 (IGIL…WMFP), 76 to 96 (HWQG…LVTL), 113 to 133 (IVFI…ALAA), 138 to 158 (ALGF…GGIA), 170 to 190 (SYLI…KLCI), and 206 to 226 (MCWF…FLYF).

The protein belongs to the paxB family.

It is found in the membrane. Its pathway is secondary metabolite biosynthesis; terpenoid biosynthesis. In terms of biological role, terpene cyclase; part of the gene cluster A that mediates the biosynthesis of the fungal meroterpenoid acetoxydehydroaustin. The first step of the pathway is the synthesis of 3,5-dimethylorsellinic acid by the polyketide synthase ausA. 3,5-dimethylorsellinic acid is then prenylated by the polyprenyl transferase ausN. Further epoxidation by the FAD-dependent monooxygenase ausM and cyclization by the probable terpene cyclase ausL lead to the formation of protoaustinoid A. Protoaustinoid A is then oxidized to spiro-lactone preaustinoid A3 by the combined action of the FAD-binding monooxygenases ausB and ausC, and the dioxygenase ausE. Acid-catalyzed keto-rearrangement and ring contraction of the tetraketide portion of preaustinoid A3 by ausJ lead to the formation of preaustinoid A4. The aldo-keto reductase ausK, with the help of ausH, is involved in the next step by transforming preaustinoid A4 into isoaustinone which is in turn hydroxylated by the P450 monooxygenase ausI to form austinolide. The cytochrome P450 monooxygenase ausG then modifies austinolide to austinol. Austinol is further acetylated to austin by the O-acetyltransferase ausP, which spontaneously changes to dehydroaustin. The cytochrome P450 monooxygenase then converts dehydroaustin is into 7-dehydrodehydroaustin. The hydroxylation catalyzed by ausR permits the second O-acetyltransferase ausQ to add an additional acetyl group to the molecule, leading to the formation of acetoxydehydroaustin. Due to genetic rearrangements of the clusters and the subsequent loss of some enzymes, the end product of the Penicillium brasilianum austinoid biosynthesis clusters is acetoxydehydroaustin. The polypeptide is Terpene cyclase ausL (Penicillium brasilianum).